The following is a 230-amino-acid chain: Large ribosomal subunit protein uL1 (230 aa).

It belongs to the universal ribosomal protein uL1 family. As to quaternary structure, part of the 50S ribosomal subunit.

Its function is as follows. Binds directly to 23S rRNA. The L1 stalk is quite mobile in the ribosome, and is involved in E site tRNA release. Protein L1 is also a translational repressor protein, it controls the translation of the L11 operon by binding to its mRNA. This Desulforapulum autotrophicum (strain ATCC 43914 / DSM 3382 / VKM B-1955 / HRM2) (Desulfobacterium autotrophicum) protein is Large ribosomal subunit protein uL1.